The chain runs to 229 residues: Juvenile hormone-binding protein (229 aa).

The signal sequence occupies residues 1–3 (VLS).

The protein localises to the secreted. Functionally, prevents juvenile hormone from being hydrolyzed by general esterases by combining with it specifically. In Manduca sexta (Tobacco hawkmoth), this protein is Juvenile hormone-binding protein (JHBP).